Consider the following 642-residue polypeptide: Mini-chromosome maintenance complex-binding protein (642 aa).

Polar residues predominate over residues 151–161 (ARVSPSTSYTP). The tract at residues 151 to 196 (ARVSPSTSYTPSRHKRSYEDDEDMDLQPSKQKEQHPGSRQAGGLGG) is disordered. Residue Ser154 is modified to Phosphoserine. Thr160 carries the post-translational modification Phosphothreonine. 2 positions are modified to phosphoserine: Ser167 and Ser298.

This sequence belongs to the MCMBP family. Interacts with the MCM complex: associates with the MCM3-7 complex which lacks MCM2, while it does not interact with the MCM complex when MCM2 is present (MCM2-7 complex). Interacts with the RPA complex, when composed of all RPA1, RPA2 and RPA3 components, but not with RPA1 or RPA2 alone.

Its subcellular location is the nucleus. Associated component of the MCM complex that acts as a regulator of DNA replication. Binds to the MCM complex during late S phase and promotes the disassembly of the MCM complex from chromatin, thereby acting as a key regulator of pre-replication complex (pre-RC) unloading from replicated DNA. Can dissociate the MCM complex without addition of ATP; probably acts by destabilizing interactions of each individual subunits of the MCM complex. Required for sister chromatid cohesion. This chain is Mini-chromosome maintenance complex-binding protein (Mcmbp), found in Mus musculus (Mouse).